The sequence spans 265 residues: Lysosomal membrane ascorbate-dependent ferrireductase CYB561A3 (265 aa).

Over Met1 to Ala2 the chain is Cytoplasmic. The helical transmembrane segment at Val3–Phe23 threads the bilayer. Positions Ala12–Leu219 constitute a Cytochrome b561 domain. The Lumenal portion of the chain corresponds to Thr24–Asn45. The helical transmembrane segment at Trp46–Tyr66 threads the bilayer. 2 residues coordinate heme b: His47 and Arg67. Residues Arg67 to His83 are Cytoplasmic-facing. L-ascorbate-binding residues include Arg76 and Lys80. His83 contacts heme b. A helical membrane pass occupies residues Ala84–Phe104. Residues His105–Trp119 lie on the Lumenal side of the membrane. Heme b contacts are provided by residues His112–Ser115 and His117. Residues Leu120–Leu140 form a helical membrane-spanning segment. Residues Leu141–Pro154 lie on the Cytoplasmic side of the membrane. Arg149 is an L-ascorbate binding site. Residues Ile155 to Ile175 form a helical membrane-spanning segment. Residues His156 and Glu177 each coordinate heme b. Over Asn176 to Ala197 the chain is Lumenal. The N-linked (GlcNAc...) asparagine glycan is linked to Asn185. The chain crosses the membrane as a helical span at residues Val198 to Leu218. The Cytoplasmic segment spans residues Leu219–Ser265. Residue Lys224 participates in heme b binding. Residues Pro228–Arg238 are compositionally biased toward basic and acidic residues. The interval Pro228 to Ser265 is disordered.

Homodimer. Heme b serves as cofactor. Post-translationally, N-glycosylated.

The protein localises to the late endosome membrane. It is found in the lysosome membrane. The catalysed reaction is Fe(3+)(out) + L-ascorbate(in) = monodehydro-L-ascorbate radical(in) + Fe(2+)(out) + H(+). Its function is as follows. Transmembrane reductase that uses ascorbate as an electron donor in the cytoplasm and transfers electrons across membranes to reduce iron cations Fe(3+) into Fe(2+) in the lumen of the late endosome and lysosome. Reduced iron can then be extruded from the late endosome and lysosome to the cytoplasm by divalent metal-specific transporters. It is therefore most probably involved in endosomal and lysosomal cellular iron homeostasis. This Bos taurus (Bovine) protein is Lysosomal membrane ascorbate-dependent ferrireductase CYB561A3.